Here is a 418-residue protein sequence, read N- to C-terminus: Tyrosine--tRNA ligase 1 (418 aa).

Residue Tyr-34 participates in L-tyrosine binding. The short motif at 39 to 48 is the 'HIGH' region element; that stretch reads PTADSLHIGH. L-tyrosine is bound by residues Tyr-169 and Gln-173. Positions 230-234 match the 'KMSKS' region motif; sequence KFGKT. Lys-233 provides a ligand contact to ATP. The region spanning 352 to 418 is the S4 RNA-binding domain; the sequence is TVLIDLLVES…GKKKYFLIRY (67 aa).

This sequence belongs to the class-I aminoacyl-tRNA synthetase family. TyrS type 1 subfamily. In terms of assembly, homodimer.

Its subcellular location is the cytoplasm. The enzyme catalyses tRNA(Tyr) + L-tyrosine + ATP = L-tyrosyl-tRNA(Tyr) + AMP + diphosphate + H(+). Functionally, catalyzes the attachment of tyrosine to tRNA(Tyr) in a two-step reaction: tyrosine is first activated by ATP to form Tyr-AMP and then transferred to the acceptor end of tRNA(Tyr). The chain is Tyrosine--tRNA ligase 1 from Bacillus cereus (strain ATCC 14579 / DSM 31 / CCUG 7414 / JCM 2152 / NBRC 15305 / NCIMB 9373 / NCTC 2599 / NRRL B-3711).